The following is a 440-amino-acid chain: Chorismate synthase 1, chloroplastic (440 aa).

The N-terminal 54 residues, 1-54, are a transit peptide targeting the chloroplast; that stretch reads MASFVPTKQFVGASSSSDIGSSRLVSLQLPSKFSSSNFHLPSRPSQLKRLEIQA. A disordered region spans residues 100–147; that stretch reads RRRPGQSRITTPRKETDTCKISSGTADGLTTGSPIKVEVPNTDQRGND. A compositionally biased stretch (polar residues) spans 118-132; the sequence is CKISSGTADGLTTGS.

The protein belongs to the chorismate synthase family. In terms of assembly, homotetramer. It depends on FMNH2 as a cofactor. As to expression, predominantly expressed in flowers and roots and, to a lesser extent, in stems, leaves, and cotyledons.

The protein resides in the plastid. It is found in the chloroplast. The enzyme catalyses 5-O-(1-carboxyvinyl)-3-phosphoshikimate = chorismate + phosphate. Its pathway is metabolic intermediate biosynthesis; chorismate biosynthesis; chorismate from D-erythrose 4-phosphate and phosphoenolpyruvate: step 7/7. Catalyzes the last common step of the biosynthesis of aromatic amino acids, produced via the shikimic acid pathway. The protein is Chorismate synthase 1, chloroplastic (CS1) of Solanum lycopersicum (Tomato).